The primary structure comprises 230 residues: MASFTLSSATPSQLCSSKNGMFAPSLALAKAGRVNVLISKERIRGMKLTCQATSIPADNVPDMQKRETLNLLLLGALSLPTGYMLLPYASFFVPPGGGAGTGGTIAKDALGNDVIAAEWLKTHAPGDRTLTQGLKGDPTYLVVESDKTLATFGINAVCTHLGCVVPFNAAENKFICPCHGSQYNNQGRVVRGPAPLSLALAHCDVDDGKVVFVPWTETDFRTGEAPWWSA.

A chloroplast-targeting transit peptide spans 1-51 (MASFTLSSATPSQLCSSKNGMFAPSLALAKAGRVNVLISKERIRGMKLTCQ). A helical membrane pass occupies residues 73–93 (LLGALSLPTGYMLLPYASFFV). The 97-residue stretch at 116–212 (AAEWLKTHAP…CDVDDGKVVF (97 aa)) folds into the Rieske domain. Positions 158, 160, 176, and 179 each coordinate [2Fe-2S] cluster. An intrachain disulfide couples C163 to C178.

This sequence belongs to the Rieske iron-sulfur protein family. The 4 large subunits of the cytochrome b6-f complex are cytochrome b6, subunit IV (17 kDa polypeptide, petD), cytochrome f and the Rieske protein, while the 4 small subunits are petG, petL, petM and petN. The complex functions as a dimer. [2Fe-2S] cluster is required as a cofactor.

It is found in the plastid. Its subcellular location is the chloroplast thylakoid membrane. It carries out the reaction 2 oxidized [plastocyanin] + a plastoquinol + 2 H(+)(in) = 2 reduced [plastocyanin] + a plastoquinone + 4 H(+)(out). Functionally, component of the cytochrome b6-f complex, which mediates electron transfer between photosystem II (PSII) and photosystem I (PSI), cyclic electron flow around PSI, and state transitions. This Spinacia oleracea (Spinach) protein is Cytochrome b6-f complex iron-sulfur subunit, chloroplastic (petC).